A 143-amino-acid chain; its full sequence is Crossover junction endodeoxyribonuclease Hjc (143 aa).

Glu-12 contributes to the Mg(2+) binding site. The active site involves Ser-32. Mg(2+) is bound by residues Asp-42 and Glu-55.

It belongs to the Holliday junction resolvase Hjc family. As to quaternary structure, homodimer. Interacts with PCNA subunit PCNA1. Mg(2+) is required as a cofactor.

The catalysed reaction is Endonucleolytic cleavage at a junction such as a reciprocal single-stranded crossover between two homologous DNA duplexes (Holliday junction).. With respect to regulation, autoinhibits at very high concentrations, possibly because of extreme junction distortion. Inhibition (and activity at low concentrations of enzyme) is stimulated by dsDNA and Sso7d. Activity stimulated by PCNA subunit PCNA1. In terms of biological role, a structure-specific endonuclease that resolves Holliday junction (HJ) intermediates during genetic recombination; may have some degree of sequence preference in a mobile junction. Cleaves 4-way DNA junctions introducing paired nicks in opposing strands, leaving a 5'-terminal phosphate and a 3'-terminal hydroxyl group that are subsequently ligated to produce recombinant products. Can cleave all 4 strands 3 bases 3' of the junction center. Cleaves both mobile and immobile junctions. Modifies the structure of the 4-way DNA junction, a model Holliday junction structure. The protein forms multiple complexes with 4-way DNA, suggesting more than 1 homodimer can bind to each junction. This Saccharolobus solfataricus (strain ATCC 35092 / DSM 1617 / JCM 11322 / P2) (Sulfolobus solfataricus) protein is Crossover junction endodeoxyribonuclease Hjc.